Reading from the N-terminus, the 344-residue chain is MLFCLLRFCYNSLMTRILDNELMGDEEFAERTLRPQYLQEYIGQDKVKDQLKIFIKAAKQRDEALDHVLLFGPPGLGKTTMAFVIANELGVNLKQTSGPAIEKAGDLVAVLNDLEPGDVLFIDEIHRLPMAVEEVLYSAMEDFYIDIMIGAGETSRSVHLDLPPFTLIGATTRAGMLSNPLRARFGITGHMEYYTDIDLTEIVERTADIFEMTITHQAALELARRSRGTPRIANRLLKRVRDYAQIMGDGLIDDKITDKALTMLDVDHEGLDYVDQKILKTMIEMYHGGPVGLGTLSVNIAEERETVEDMYEPYLIQKGFIIRTRSGRVATAKAYEHLGYRYTE.

The tract at residues 4-194 (CLLRFCYNSL…FGITGHMEYY (191 aa)) is large ATPase domain (RuvB-L). Residues Leu-33, Arg-34, Gly-75, Lys-78, Thr-79, Thr-80, 141–143 (EDF), Arg-184, Tyr-194, and Arg-231 each bind ATP. Thr-79 is a Mg(2+) binding site. A small ATPAse domain (RuvB-S) region spans residues 195 to 265 (TDIDLTEIVE…ITDKALTMLD (71 aa)). The tract at residues 268-344 (HEGLDYVDQK…YEHLGYRYTE (77 aa)) is head domain (RuvB-H). Residues Arg-304, Arg-323, Arg-325, and Arg-328 each contribute to the DNA site.

It belongs to the RuvB family. As to quaternary structure, homohexamer. Forms an RuvA(8)-RuvB(12)-Holliday junction (HJ) complex. HJ DNA is sandwiched between 2 RuvA tetramers; dsDNA enters through RuvA and exits via RuvB. An RuvB hexamer assembles on each DNA strand where it exits the tetramer. Each RuvB hexamer is contacted by two RuvA subunits (via domain III) on 2 adjacent RuvB subunits; this complex drives branch migration. In the full resolvosome a probable DNA-RuvA(4)-RuvB(12)-RuvC(2) complex forms which resolves the HJ.

It localises to the cytoplasm. It catalyses the reaction ATP + H2O = ADP + phosphate + H(+). Functionally, the RuvA-RuvB-RuvC complex processes Holliday junction (HJ) DNA during genetic recombination and DNA repair, while the RuvA-RuvB complex plays an important role in the rescue of blocked DNA replication forks via replication fork reversal (RFR). RuvA specifically binds to HJ cruciform DNA, conferring on it an open structure. The RuvB hexamer acts as an ATP-dependent pump, pulling dsDNA into and through the RuvAB complex. RuvB forms 2 homohexamers on either side of HJ DNA bound by 1 or 2 RuvA tetramers; 4 subunits per hexamer contact DNA at a time. Coordinated motions by a converter formed by DNA-disengaged RuvB subunits stimulates ATP hydrolysis and nucleotide exchange. Immobilization of the converter enables RuvB to convert the ATP-contained energy into a lever motion, pulling 2 nucleotides of DNA out of the RuvA tetramer per ATP hydrolyzed, thus driving DNA branch migration. The RuvB motors rotate together with the DNA substrate, which together with the progressing nucleotide cycle form the mechanistic basis for DNA recombination by continuous HJ branch migration. Branch migration allows RuvC to scan DNA until it finds its consensus sequence, where it cleaves and resolves cruciform DNA. This is Holliday junction branch migration complex subunit RuvB from Streptococcus mutans serotype c (strain ATCC 700610 / UA159).